The chain runs to 101 residues: Putative pterin-4-alpha-carbinolamine dehydratase (101 aa).

The protein belongs to the pterin-4-alpha-carbinolamine dehydratase family.

The catalysed reaction is (4aS,6R)-4a-hydroxy-L-erythro-5,6,7,8-tetrahydrobiopterin = (6R)-L-erythro-6,7-dihydrobiopterin + H2O. The sequence is that of Putative pterin-4-alpha-carbinolamine dehydratase (phhB) from Ralstonia nicotianae (strain ATCC BAA-1114 / GMI1000) (Ralstonia solanacearum).